The sequence spans 555 residues: Glycerol dehydratase large subunit (555 aa).

This sequence belongs to the diol/glycerol dehydratase large subunit family. In terms of assembly, probably consists of three subunits: large, medium, and small. It depends on adenosylcob(III)alamin as a cofactor.

The catalysed reaction is glycerol = 3-hydroxypropanal + H2O. The sequence is that of Glycerol dehydratase large subunit (dhaB) from Citrobacter freundii.